The chain runs to 157 residues: Ribonuclease H (157 aa).

The 142-residue stretch at 3–144 (ELKQLYIFTD…CDVLARKAAE (142 aa)) folds into the RNase H type-1 domain. Mg(2+) is bound by residues aspartate 12, glutamate 50, aspartate 72, and aspartate 136.

It belongs to the RNase H family. Monomer. Mg(2+) serves as cofactor.

The protein resides in the cytoplasm. It catalyses the reaction Endonucleolytic cleavage to 5'-phosphomonoester.. In terms of biological role, endonuclease that specifically degrades the RNA of RNA-DNA hybrids. The sequence is that of Ribonuclease H from Shewanella frigidimarina (strain NCIMB 400).